The sequence spans 626 residues: Putative ankyrin repeat protein L768 (626 aa).

ANK repeat units lie at residues 217–246 (NLYDVFKYACSRGKLHIIDYLLDKRIEYDF), 333–362 (DLDMIIVMAIEFNSMELINWCMNNGININK), 421–451 (TAENIIHNIIENRPHIEILKYLLTEVQTEHI), 515–545 (SNLKILFVTIMTDNIDILEFLLEINKYNQDY), and 547–571 (QWALIFSSNNITILEYIINNTNVNP).

The sequence is that of Putative ankyrin repeat protein L768 from Acanthamoeba polyphaga mimivirus (APMV).